A 537-amino-acid chain; its full sequence is tRNA(His) guanylyltransferase 2 (537 aa).

3 residues coordinate Mg(2+): Asp307, Gly308, and Asp354. GTP contacts are provided by residues 307–312 (DGCHFH) and 353–354 (SD).

Belongs to the tRNA(His) guanylyltransferase family. Mg(2+) serves as cofactor.

It localises to the nucleus. The protein localises to the nucleoplasm. It carries out the reaction a 5'-end ribonucleotide-tRNA(His) + GTP + ATP + H2O = a 5'-end phospho-guanosine-ribonucleotide-tRNA(His) + AMP + 2 diphosphate + H(+). In terms of biological role, adds a GMP to the 5'-end of tRNA(His) after transcription and RNase P cleavage. The polypeptide is tRNA(His) guanylyltransferase 2 (THG2) (Arabidopsis thaliana (Mouse-ear cress)).